A 93-amino-acid polypeptide reads, in one-letter code: DNA/RNA-binding protein Alba (93 aa).

Lysine 11 carries the N6-acetyllysine modification.

The protein belongs to the histone-like Alba family. Acetylated. Acetylation at Lys-11 decreases DNA-binding affinity.

It is found in the cytoplasm. The protein localises to the chromosome. Functionally, binds double-stranded DNA tightly but without sequence specificity. Involved in DNA compaction. The protein is DNA/RNA-binding protein Alba of Pyrococcus abyssi (strain GE5 / Orsay).